Here is a 130-residue protein sequence, read N- to C-terminus: Secreted cysteine-rich effector 2 (130 aa).

The N-terminal stretch at 1–23 (MLINAARLLLPAAALVHLSLAWA) is a signal peptide. The tract at residues 68–85 (LKNGEDWCKHCASPRVSV) is plant immunity suppression domain.

Its subcellular location is the secreted. The protein localises to the host cell. The protein resides in the host periplasm. Functionally, secreted effector required for full virulence of U.virens. Inhibits host pathogen-associated molecular pattern-triggered immunity including flg22- and chitin-induced defense gene expression and oxidative burst. In Ustilaginoidea virens (Rice false smut fungus), this protein is Secreted cysteine-rich effector 2.